The chain runs to 96 residues: ATP-dependent Clp protease adapter protein ClpS (96 aa).

It belongs to the ClpS family. Binds to the N-terminal domain of the chaperone ClpA.

In terms of biological role, involved in the modulation of the specificity of the ClpAP-mediated ATP-dependent protein degradation. The protein is ATP-dependent Clp protease adapter protein ClpS of Campylobacter jejuni subsp. jejuni serotype O:6 (strain 81116 / NCTC 11828).